A 613-amino-acid chain; its full sequence is Laccase 1 (613 aa).

Residues 1–20 (MSRFARLLLIVALFFTNAWA) form the signal peptide. 2 consecutive Plastocyanin-like domains span residues 29-142 (ITWK…IRPK) and 171-359 (YLVV…MRIP). An N-linked (GlcNAc...) asparagine glycan is attached at Asn74. Residues His78, His80, His122, and His124 each coordinate Cu cation. N-linked (GlcNAc...) asparagine glycans are attached at residues Asn256, Asn279, Asn444, Asn468, and Asn484. Positions 468–598 (NATRDTENDG…GGMGIAILDG (131 aa)) constitute a Plastocyanin-like 3 domain. Residues His506, His509, and His511 each contribute to the Cu cation site. Asn526 carries N-linked (GlcNAc...) asparagine glycosylation. The Cu cation site is built by His580, Cys581, His582, and His586.

This sequence belongs to the multicopper oxidase family. Requires Cu cation as cofactor.

It is found in the cell surface. The protein operates within pigment biosynthesis. Laccase; part of the Pks1 gene cluster that mediates the biosynthesis of an anthraquinone derivative pigment that contributes to conidial pigmentation that provides protection from UV radiation, heat and cold stress. The polyketide synthase Pks1 produces 1-acetyl-2,4,6,8-tetrahydroxy-9,10-anthraquinone though condensation of acetyl-CoA with malonyl-CoA. The dehydratase EthD and the laccase Mlac1 further convert the anthraquinone derivative into the final conidial pigment. The polypeptide is Laccase 1 (Metarhizium robertsii (strain ARSEF 23 / ATCC MYA-3075) (Metarhizium anisopliae (strain ARSEF 23))).